Consider the following 553-residue polypeptide: uncharacterized protein (553 aa).

The signal sequence occupies residues 1-28 (MRYARHASRYSLFTLAVSAALLPGAGWA).

This is an uncharacterized protein from Pseudomonas aeruginosa (strain ATCC 15692 / DSM 22644 / CIP 104116 / JCM 14847 / LMG 12228 / 1C / PRS 101 / PAO1).